The following is a 260-amino-acid chain: Large ribosomal subunit protein uL4 (260 aa).

It belongs to the universal ribosomal protein uL4 family. As to quaternary structure, part of the 50S ribosomal subunit.

Its function is as follows. One of the primary rRNA binding proteins, this protein initially binds near the 5'-end of the 23S rRNA. It is important during the early stages of 50S assembly. It makes multiple contacts with different domains of the 23S rRNA in the assembled 50S subunit and ribosome. In terms of biological role, forms part of the polypeptide exit tunnel. The polypeptide is Large ribosomal subunit protein uL4 (Methanopyrus kandleri (strain AV19 / DSM 6324 / JCM 9639 / NBRC 100938)).